Consider the following 425-residue polypeptide: tRNA(Ile)-lysidine synthase (425 aa).

Position 27–32 (27–32 (SGGLDS)) interacts with ATP.

Belongs to the tRNA(Ile)-lysidine synthase family.

The protein localises to the cytoplasm. It catalyses the reaction cytidine(34) in tRNA(Ile2) + L-lysine + ATP = lysidine(34) in tRNA(Ile2) + AMP + diphosphate + H(+). Functionally, ligates lysine onto the cytidine present at position 34 of the AUA codon-specific tRNA(Ile) that contains the anticodon CAU, in an ATP-dependent manner. Cytidine is converted to lysidine, thus changing the amino acid specificity of the tRNA from methionine to isoleucine. In Streptococcus pneumoniae (strain P1031), this protein is tRNA(Ile)-lysidine synthase.